Consider the following 483-residue polypeptide: UDP-N-acetylmuramyl-tripeptide synthetase (483 aa).

Ser43 provides a ligand contact to UDP-N-acetyl-alpha-D-muramoyl-L-alanyl-D-glutamate. Position 116-122 (116-122 (GTKGKTT)) interacts with ATP. Residues 160 to 161 (TT), Ser187, and Arg195 contribute to the UDP-N-acetyl-alpha-D-muramoyl-L-alanyl-D-glutamate site. Lys229 carries the post-translational modification N6-carboxylysine.

Belongs to the MurCDEF family. MurE subfamily. Post-translationally, carboxylation is probably crucial for Mg(2+) binding and, consequently, for the gamma-phosphate positioning of ATP.

It localises to the cytoplasm. The protein operates within cell wall biogenesis; peptidoglycan biosynthesis. Functionally, catalyzes the addition of an amino acid to the nucleotide precursor UDP-N-acetylmuramoyl-L-alanyl-D-glutamate (UMAG) in the biosynthesis of bacterial cell-wall peptidoglycan. The chain is UDP-N-acetylmuramyl-tripeptide synthetase from Lactococcus lactis subsp. cremoris (strain SK11).